Reading from the N-terminus, the 272-residue chain is Phosphatidylglycerol--prolipoprotein diacylglyceryl transferase (272 aa).

Transmembrane regions (helical) follow at residues 17–37 (LAIR…LGFG), 59–79 (MLFF…VLFY), 95–115 (WEGG…MWLF), 129–149 (FIAP…FING), 176–196 (SQLY…WLFA), 202–222 (MGAV…AAEF), and 237–257 (LSMG…MVVW). A 1,2-diacyl-sn-glycero-3-phospho-(1'-sn-glycerol) is bound at residue R142.

This sequence belongs to the Lgt family.

It localises to the cell inner membrane. The catalysed reaction is L-cysteinyl-[prolipoprotein] + a 1,2-diacyl-sn-glycero-3-phospho-(1'-sn-glycerol) = an S-1,2-diacyl-sn-glyceryl-L-cysteinyl-[prolipoprotein] + sn-glycerol 1-phosphate + H(+). It participates in protein modification; lipoprotein biosynthesis (diacylglyceryl transfer). In terms of biological role, catalyzes the transfer of the diacylglyceryl group from phosphatidylglycerol to the sulfhydryl group of the N-terminal cysteine of a prolipoprotein, the first step in the formation of mature lipoproteins. This is Phosphatidylglycerol--prolipoprotein diacylglyceryl transferase from Cupriavidus necator (strain ATCC 17699 / DSM 428 / KCTC 22496 / NCIMB 10442 / H16 / Stanier 337) (Ralstonia eutropha).